The following is a 192-amino-acid chain: Probable GTP-binding protein EngB (192 aa).

The EngB-type G domain occupies 22–192 (GRPEIVFVGR…LLASIDTFTQ (171 aa)). Residues 30–37 (GRSNVGKS), 57–61 (GKTRL), 75–78 (DLPG), 142–145 (TKWD), and 172–174 (YSS) contribute to the GTP site. Residues serine 37 and threonine 59 each coordinate Mg(2+).

It belongs to the TRAFAC class TrmE-Era-EngA-EngB-Septin-like GTPase superfamily. EngB GTPase family. Mg(2+) serves as cofactor.

Necessary for normal cell division and for the maintenance of normal septation. The sequence is that of Probable GTP-binding protein EngB from Chlorobaculum tepidum (strain ATCC 49652 / DSM 12025 / NBRC 103806 / TLS) (Chlorobium tepidum).